The primary structure comprises 305 residues: DNA-directed RNA polymerase 35 kDa subunit (305 aa).

This sequence belongs to the poxviridae DNA-directed RNA polymerase 35 kDa subunit family. The DNA-dependent RNA polymerase used for intermediate and late genes expression consists of eight subunits 147 kDa, 133 kDa, 35 kDa, 30 kDa, 22 kDa, 19 kDa, 18 kDa and 7 kDa totalling more than 500 kDa in mass. The same holoenzyme, with the addition of the transcription-specificity factor RAP94, is used for early gene expression.

It is found in the virion. It catalyses the reaction RNA(n) + a ribonucleoside 5'-triphosphate = RNA(n+1) + diphosphate. In terms of biological role, part of the DNA-dependent RNA polymerase which catalyzes the transcription of viral DNA into RNA using the four ribonucleoside triphosphates as substrates. Responsible for the transcription of early, intermediate and late genes. DNA-dependent RNA polymerase associates with the early transcription factor (ETF), itself composed of D6 and A7, thereby allowing the early genes transcription. Late transcription, and probably also intermediate transcription, require newly synthesized RNA polymerase. This chain is DNA-directed RNA polymerase 35 kDa subunit (OPG156), found in Cynomys gunnisoni (Gunnison's prairie dog).